A 470-amino-acid polypeptide reads, in one-letter code: 5-hydroxytryptamine receptor 2A (470 aa).

The Extracellular portion of the chain corresponds to 1–80 (MDILCEENTS…LQEKNWSALL (80 aa)). A glycan (N-linked (GlcNAc...) asparagine) is linked at Asn-38. A helical membrane pass occupies residues 81–97 (TAVVIILTIAGNILVIM). Residues 98–111 (AVSLEKKLQNATNY) lie on the Cytoplasmic side of the membrane. Residues 112 to 137 (FLMSLAIADMLLGFLVMPVSTLTILY) form a helical membrane-spanning segment. Topologically, residues 138–146 (GYRWPLPSK) are extracellular. A helical transmembrane segment spans residues 147 to 171 (LCAVWIYLDVLFSTASIMHLCAISL). Cysteines 148 and 227 form a disulfide. Asp-155 contributes to the serotonin binding site. A DRY motif; important for ligand-induced conformation changes motif is present at residues 172–174 (DRY). Over 172–191 (DRYVAIQNPIHHSRFNSRTK) the chain is Cytoplasmic. A helical transmembrane segment spans residues 192 to 215 (AFLKIIAVWTISVGISMPIPVFGL). Residues 216–232 (QDDSKVFKEGSCLLADE) are Extracellular-facing. Residues 233–258 (NFVLIGSFVAFFIPLTIMVITYFLTI) form a helical membrane-spanning segment. Residues 259–321 (KSLQKEATLC…QSISNEQKAC (63 aa)) lie on the Cytoplasmic side of the membrane. Residue Ser-280 is modified to Phosphoserine. Residues 322–347 (KVLGIVFFLFVVMWCPFFITNIMAVI) traverse the membrane as a helical segment. Residue Asn-342 coordinates serotonin. Residues Cys-348 and Cys-352 are joined by a disulfide bond. Residues 348–355 (CKESCNRD) lie on the Extracellular side of the membrane. Residues 356–381 (VIEALLNVFVWIGYLSSAVNPLVYTL) traverse the membrane as a helical segment. The NPxxY motif; important for ligand-induced conformation changes and signaling signature appears at 375–379 (NPLVY). At 382-470 (FNKTYRSAFS…NTVNEKVSCV (89 aa)) the chain is on the cytoplasmic side. The segment at 424–470 (QMGPKKNSKKDDKTTDNDCTMVALGKEHPEDAPADSSNTVNEKVSCV) is disordered. Polar residues predominate over residues 458-470 (DSSNTVNEKVSCV). A PDZ-binding motif is present at residues 468–470 (SCV).

It belongs to the G-protein coupled receptor 1 family. In terms of assembly, interacts (via C-terminus) with MPDZ and PATJ. May interact (via C-terminus) with MPP3, PRDX6, DLG4, DLG1, CASK, APBA1 and MAGI2. Interacts with GRM2 and DRD2; this may affect signaling.

The protein resides in the cell membrane. It is found in the cell projection. Its subcellular location is the dendrite. It localises to the axon. The protein localises to the cytoplasmic vesicle. The protein resides in the membrane. It is found in the caveola. Its subcellular location is the presynapse. G-protein coupled receptor activity is regulated by lipids: oleamide increases HTR2A-mediated activity. Its function is as follows. G-protein coupled receptor for 5-hydroxytryptamine (serotonin). Also functions as a receptor for various drugs and psychoactive substances, including mescaline, psilocybin, 1-(2,5-dimethoxy-4-iodophenyl)-2-aminopropane (DOI) and lysergic acid diethylamide (LSD). Ligand binding causes a conformation change that triggers signaling via guanine nucleotide-binding proteins (G proteins) and modulates the activity of downstream effectors. HTR2A is coupled to G(q)/G(11) G alpha proteins and activates phospholipase C-beta, releasing diacylglycerol (DAG) and inositol 1,4,5-trisphosphate (IP3) second messengers that modulate the activity of phosphatidylinositol 3-kinase and promote the release of Ca(2+) ions from intracellular stores, respectively. Beta-arrestin family members inhibit signaling via G proteins and mediate activation of alternative signaling pathways. Affects neural activity, perception, cognition and mood. Plays a role in the regulation of behavior, including responses to anxiogenic situations and psychoactive substances. Plays a role in intestinal smooth muscle contraction, and may play a role in arterial vasoconstriction. In Bos taurus (Bovine), this protein is 5-hydroxytryptamine receptor 2A (HTR2A).